Reading from the N-terminus, the 222-residue chain is Uracil-DNA glycosylase (222 aa).

The active-site Proton acceptor is aspartate 61.

The protein belongs to the uracil-DNA glycosylase (UDG) superfamily. UNG family.

The protein resides in the cytoplasm. It catalyses the reaction Hydrolyzes single-stranded DNA or mismatched double-stranded DNA and polynucleotides, releasing free uracil.. Functionally, excises uracil residues from the DNA which can arise as a result of misincorporation of dUMP residues by DNA polymerase or due to deamination of cytosine. In Actinobacillus succinogenes (strain ATCC 55618 / DSM 22257 / CCUG 43843 / 130Z), this protein is Uracil-DNA glycosylase.